Reading from the N-terminus, the 364-residue chain is Histidinol-phosphate aminotransferase (364 aa).

An N6-(pyridoxal phosphate)lysine modification is found at Lys220.

It belongs to the class-II pyridoxal-phosphate-dependent aminotransferase family. Histidinol-phosphate aminotransferase subfamily. Homodimer. It depends on pyridoxal 5'-phosphate as a cofactor.

The catalysed reaction is L-histidinol phosphate + 2-oxoglutarate = 3-(imidazol-4-yl)-2-oxopropyl phosphate + L-glutamate. The protein operates within amino-acid biosynthesis; L-histidine biosynthesis; L-histidine from 5-phospho-alpha-D-ribose 1-diphosphate: step 7/9. This chain is Histidinol-phosphate aminotransferase, found in Stenotrophomonas maltophilia (strain R551-3).